A 251-amino-acid polypeptide reads, in one-letter code: Ubiquitin-conjugating enzyme E2 22 (251 aa).

The 147-residue stretch at 10 to 156 folds into the UBC core domain; it reads NVIKQLAKEL…ARLYTGIHAK (147 aa). Catalysis depends on Cys-94, which acts as the Glycyl thioester intermediate. The span at 230-240 shows a compositional bias: basic and acidic residues; it reads GLAKVQADKKK. Positions 230 to 251 are disordered; sequence GLAKVQADKKKVDARKKSLKRL. Residues 230–251 adopt a coiled-coil conformation; the sequence is GLAKVQADKKKVDARKKSLKRL. The span at 241-251 shows a compositional bias: basic residues; the sequence is VDARKKSLKRL.

Belongs to the ubiquitin-conjugating enzyme family. In terms of processing, self-ubiquitinated. In terms of tissue distribution, expressed in seeds, pistils, siliques, hypocotyls and leaves.

It catalyses the reaction S-ubiquitinyl-[E1 ubiquitin-activating enzyme]-L-cysteine + [E2 ubiquitin-conjugating enzyme]-L-cysteine = [E1 ubiquitin-activating enzyme]-L-cysteine + S-ubiquitinyl-[E2 ubiquitin-conjugating enzyme]-L-cysteine.. It participates in protein modification; protein ubiquitination. In terms of biological role, accepts the ubiquitin from the E1 complex and catalyzes its covalent attachment to other proteins. The sequence is that of Ubiquitin-conjugating enzyme E2 22 (UBC22) from Arabidopsis thaliana (Mouse-ear cress).